Here is a 245-residue protein sequence, read N- to C-terminus: 1-(5-phosphoribosyl)-5-[(5-phosphoribosylamino)methylideneamino] imidazole-4-carboxamide isomerase (245 aa).

D7 serves as the catalytic Proton acceptor. Catalysis depends on D129, which acts as the Proton donor.

The protein belongs to the HisA/HisF family.

Its subcellular location is the cytoplasm. It catalyses the reaction 1-(5-phospho-beta-D-ribosyl)-5-[(5-phospho-beta-D-ribosylamino)methylideneamino]imidazole-4-carboxamide = 5-[(5-phospho-1-deoxy-D-ribulos-1-ylimino)methylamino]-1-(5-phospho-beta-D-ribosyl)imidazole-4-carboxamide. It participates in amino-acid biosynthesis; L-histidine biosynthesis; L-histidine from 5-phospho-alpha-D-ribose 1-diphosphate: step 4/9. The chain is 1-(5-phosphoribosyl)-5-[(5-phosphoribosylamino)methylideneamino] imidazole-4-carboxamide isomerase from Salmonella enteritidis PT4 (strain P125109).